The following is a 352-amino-acid chain: Inner membrane protein YeeA (352 aa).

Residues methionine 1–arginine 25 are Cytoplasmic-facing. A run of 2 helical transmembrane segments spans residues valine 26–threonine 46 and tryptophan 47–proline 67. Arginine 68 is a topological domain (cytoplasmic). A helical membrane pass occupies residues alanine 69–leucine 89. Residue glutamate 90 is a topological domain, periplasmic. The chain crosses the membrane as a helical span at residues leucine 91–leucine 111. At alanine 112–proline 117 the chain is on the cytoplasmic side. Residues tyrosine 118–isoleucine 138 form a helical membrane-spanning segment. Residues aspartate 139–aspartate 147 are Periplasmic-facing. The helical transmembrane segment at valine 148–isoleucine 168 threads the bilayer. At histidine 169 to lysine 352 the chain is on the cytoplasmic side.

The protein resides in the cell inner membrane. This is Inner membrane protein YeeA (yeeA) from Escherichia coli (strain K12).